The chain runs to 143 residues: Large ribosomal subunit protein uL11 (143 aa).

It belongs to the universal ribosomal protein uL11 family. In terms of assembly, part of the ribosomal stalk of the 50S ribosomal subunit. Interacts with L10 and the large rRNA to form the base of the stalk. L10 forms an elongated spine to which L12 dimers bind in a sequential fashion forming a multimeric L10(L12)X complex. In terms of processing, one or more lysine residues are methylated.

Functionally, forms part of the ribosomal stalk which helps the ribosome interact with GTP-bound translation factors. This chain is Large ribosomal subunit protein uL11, found in Rhizobium etli (strain ATCC 51251 / DSM 11541 / JCM 21823 / NBRC 15573 / CFN 42).